The following is a 296-amino-acid chain: Ribosomal protein L11 methyltransferase (296 aa).

Positions 145, 166, 188, and 230 each coordinate S-adenosyl-L-methionine.

The protein belongs to the methyltransferase superfamily. PrmA family.

The protein localises to the cytoplasm. It catalyses the reaction L-lysyl-[protein] + 3 S-adenosyl-L-methionine = N(6),N(6),N(6)-trimethyl-L-lysyl-[protein] + 3 S-adenosyl-L-homocysteine + 3 H(+). Functionally, methylates ribosomal protein L11. The sequence is that of Ribosomal protein L11 methyltransferase from Histophilus somni (strain 2336) (Haemophilus somnus).